The chain runs to 294 residues: Flavin-dependent thymidylate synthase (294 aa).

The region spanning 27-250 is the ThyX domain; it reads GFIRVIDYMG…PFTYEAFEEY (224 aa). Residues T73, 96–98, and E104 contribute to the FAD site; that span reads RHR. Residues 93–96, 104–108, and R189 contribute to the dUMP site; these read QWIR and EYSAR. Residues 96 to 106 carry the ThyX motif motif; it reads RHRTASVNEYS. Residues 205 to 207 and H211 contribute to the FAD site; that span reads NLH. R216 serves as a coordination point for dUMP. Catalysis depends on R216, which acts as the Involved in ionization of N3 of dUMP, leading to its activation.

Belongs to the thymidylate synthase ThyX family. As to quaternary structure, homotetramer. The cofactor is FAD.

The enzyme catalyses dUMP + (6R)-5,10-methylene-5,6,7,8-tetrahydrofolate + NADPH + H(+) = dTMP + (6S)-5,6,7,8-tetrahydrofolate + NADP(+). It functions in the pathway pyrimidine metabolism; dTTP biosynthesis. In terms of biological role, catalyzes the reductive methylation of 2'-deoxyuridine-5'-monophosphate (dUMP) to 2'-deoxythymidine-5'-monophosphate (dTMP) while utilizing 5,10-methylenetetrahydrofolate (mTHF) as the methyl donor, and NADPH and FADH(2) as the reductant. This chain is Flavin-dependent thymidylate synthase, found in Rickettsia prowazekii (strain Madrid E).